The following is a 175-amino-acid chain: RNA pyrophosphohydrolase (175 aa).

Positions 6 to 149 constitute a Nudix hydrolase domain; the sequence is GYRPNVGIVI…KRDVYRRVMK (144 aa). Positions 38–59 match the Nudix box motif; it reads GGINAGETAEQAMYRELFEEVG.

This sequence belongs to the Nudix hydrolase family. RppH subfamily. It depends on a divalent metal cation as a cofactor.

Functionally, accelerates the degradation of transcripts by removing pyrophosphate from the 5'-end of triphosphorylated RNA, leading to a more labile monophosphorylated state that can stimulate subsequent ribonuclease cleavage. This Sodalis glossinidius (strain morsitans) protein is RNA pyrophosphohydrolase.